The primary structure comprises 299 residues: Ribosomal protein L11 methyltransferase (299 aa).

Positions 150, 171, 193, and 234 each coordinate S-adenosyl-L-methionine.

It belongs to the methyltransferase superfamily. PrmA family.

The protein resides in the cytoplasm. It catalyses the reaction L-lysyl-[protein] + 3 S-adenosyl-L-methionine = N(6),N(6),N(6)-trimethyl-L-lysyl-[protein] + 3 S-adenosyl-L-homocysteine + 3 H(+). Functionally, methylates ribosomal protein L11. This chain is Ribosomal protein L11 methyltransferase, found in Dictyoglomus turgidum (strain DSM 6724 / Z-1310).